A 156-amino-acid chain; its full sequence is Ribonuclease H (156 aa).

The 142-residue stretch at 1 to 142 (MNKQVEIFTD…CDELARQAAE (142 aa)) folds into the RNase H type-1 domain. The Mg(2+) site is built by aspartate 10, glutamate 48, aspartate 70, and aspartate 134. Residues 135–156 (ELARQAAENPTEDDIGYQPEPQ) form a disordered region.

This sequence belongs to the RNase H family. As to quaternary structure, monomer. Requires Mg(2+) as cofactor.

It localises to the cytoplasm. It carries out the reaction Endonucleolytic cleavage to 5'-phosphomonoester.. Endonuclease that specifically degrades the RNA of RNA-DNA hybrids. In Vibrio cholerae serotype O1 (strain M66-2), this protein is Ribonuclease H.